The chain runs to 177 residues: Endoribonuclease YbeY (177 aa).

Positions 118, 122, and 128 each coordinate Zn(2+).

Belongs to the endoribonuclease YbeY family. It depends on Zn(2+) as a cofactor.

It localises to the cytoplasm. Functionally, single strand-specific metallo-endoribonuclease involved in late-stage 70S ribosome quality control and in maturation of the 3' terminus of the 16S rRNA. This is Endoribonuclease YbeY from Mycobacterium bovis (strain ATCC BAA-935 / AF2122/97).